We begin with the raw amino-acid sequence, 387 residues long: MARTKSKPRKRTTVRKARRSVKRRTTTKGTKRKTAGDPVTKAKRGVATSSPFAAHHAVRMNPFSGATTQPKIPDGGFTSSLSRRLQNVVEVTNASNEGIMHLVMAPTMGVPICVTHTTEGASTRSGATLKPSYLGFLGQGVGLETKVGGVIKWPIANTDTGDVINAADFAKWRVVSQGLQITLNNVDDENDGWFEAVRFNWRNDNEDICLTSLDGTDTGNVIGAAPNLNGLPLLTANIVEMPGYKSGLLKDIKDYQFMLHPQQTRHDPVEITKSIDFVGGTDLNYDTQSKKANLGDSAAGTLLKQGLVDQNMDWMYIRIHPRSNTGAAGQTGSKLICNYIQNLEFAFSPDSDLATYMTTNRMDPKSAKINDQLNNNQDAANKKREFN.

Residues methionine 1–lysine 33 show a composition bias toward basic residues. 2 disordered regions span residues methionine 1–alanine 47 and lysine 365–asparagine 387. 2 short sequence motifs (nuclear localization signal) span residues proline 8–arginine 15 and threonine 30–aspartate 37. Over residues asparagine 370–alanine 379 the composition is skewed to low complexity.

It is found in the host nucleus. It localises to the virion. In terms of biological role, self-assembles to form the virion icosahedral capsid. The sequence is that of Capsid protein from Chaetoceros protobacilladnavirus 2 (Chaetoceros sp. DNA virus 7).